Here is a 490-residue protein sequence, read N- to C-terminus: Aspartyl/glutamyl-tRNA(Asn/Gln) amidotransferase subunit B (490 aa).

The protein belongs to the GatB/GatE family. GatB subfamily. Heterotrimer of A, B and C subunits.

The enzyme catalyses L-glutamyl-tRNA(Gln) + L-glutamine + ATP + H2O = L-glutaminyl-tRNA(Gln) + L-glutamate + ADP + phosphate + H(+). It carries out the reaction L-aspartyl-tRNA(Asn) + L-glutamine + ATP + H2O = L-asparaginyl-tRNA(Asn) + L-glutamate + ADP + phosphate + 2 H(+). In terms of biological role, allows the formation of correctly charged Asn-tRNA(Asn) or Gln-tRNA(Gln) through the transamidation of misacylated Asp-tRNA(Asn) or Glu-tRNA(Gln) in organisms which lack either or both of asparaginyl-tRNA or glutaminyl-tRNA synthetases. The reaction takes place in the presence of glutamine and ATP through an activated phospho-Asp-tRNA(Asn) or phospho-Glu-tRNA(Gln). This Prochlorococcus marinus subsp. pastoris (strain CCMP1986 / NIES-2087 / MED4) protein is Aspartyl/glutamyl-tRNA(Asn/Gln) amidotransferase subunit B.